A 286-amino-acid chain; its full sequence is Acetyl-coenzyme A carboxylase carboxyl transferase subunit beta (286 aa).

The 259-residue stretch at 28-286 (LMQKCSNCKK…KMHMDGRQLK (259 aa)) folds into the CoA carboxyltransferase N-terminal domain. 4 residues coordinate Zn(2+): cysteine 32, cysteine 35, cysteine 51, and cysteine 54. The segment at 32 to 54 (CSNCKKIYYRKEMVKALQVCPNC) adopts a C4-type zinc-finger fold.

It belongs to the AccD/PCCB family. In terms of assembly, acetyl-CoA carboxylase is a heterohexamer composed of biotin carboxyl carrier protein (AccB), biotin carboxylase (AccC) and two subunits each of ACCase subunit alpha (AccA) and ACCase subunit beta (AccD). Requires Zn(2+) as cofactor.

It localises to the cytoplasm. The catalysed reaction is N(6)-carboxybiotinyl-L-lysyl-[protein] + acetyl-CoA = N(6)-biotinyl-L-lysyl-[protein] + malonyl-CoA. It participates in lipid metabolism; malonyl-CoA biosynthesis; malonyl-CoA from acetyl-CoA: step 1/1. Functionally, component of the acetyl coenzyme A carboxylase (ACC) complex. Biotin carboxylase (BC) catalyzes the carboxylation of biotin on its carrier protein (BCCP) and then the CO(2) group is transferred by the transcarboxylase to acetyl-CoA to form malonyl-CoA. The polypeptide is Acetyl-coenzyme A carboxylase carboxyl transferase subunit beta (Oceanobacillus iheyensis (strain DSM 14371 / CIP 107618 / JCM 11309 / KCTC 3954 / HTE831)).